We begin with the raw amino-acid sequence, 342 residues long: UDP-N-acetylenolpyruvoylglucosamine reductase (342 aa).

Residues 17-192 (RFEAAARYAA…AEVTFALPVD (176 aa)) enclose the FAD-binding PCMH-type domain. Arginine 168 is a catalytic residue. Catalysis depends on serine 242, which acts as the Proton donor. Glutamate 338 is an active-site residue.

Belongs to the MurB family. It depends on FAD as a cofactor.

The protein resides in the cytoplasm. It carries out the reaction UDP-N-acetyl-alpha-D-muramate + NADP(+) = UDP-N-acetyl-3-O-(1-carboxyvinyl)-alpha-D-glucosamine + NADPH + H(+). Its pathway is cell wall biogenesis; peptidoglycan biosynthesis. In terms of biological role, cell wall formation. This chain is UDP-N-acetylenolpyruvoylglucosamine reductase, found in Ralstonia nicotianae (strain ATCC BAA-1114 / GMI1000) (Ralstonia solanacearum).